The chain runs to 326 residues: Peroxidase 1 (326 aa).

Positions 1 to 22 are cleaved as a signal peptide; sequence MASSRVILALLLAAAAVMASSA. Gln-23 is modified (pyrrolidone carboxylic acid). Intrachain disulfides connect Cys-33–Cys-112, Cys-66–Cys-71, Cys-118–Cys-322, and Cys-196–Cys-231. Residue His-64 is the Proton acceptor of the active site. 5 residues coordinate Ca(2+): Asp-65, Val-68, Gly-70, Asp-72, and Ser-74. N-linked (GlcNAc...) asparagine glycosylation is found at Asn-82 and Asn-153. Pro-159 lines the substrate pocket. Asn-164 is a glycosylation site (N-linked (GlcNAc...) asparagine). His-189 serves as a coordination point for heme b. A Ca(2+)-binding site is contributed by Thr-190. 2 N-linked (GlcNAc...) asparagine glycosylation sites follow: Asn-205 and Asn-237. Residues Asp-244, Ser-247, and Asp-252 each contribute to the Ca(2+) site.

Belongs to the peroxidase family. Classical plant (class III) peroxidase subfamily. Requires Ca(2+) as cofactor. The cofactor is heme b.

Its subcellular location is the secreted. The catalysed reaction is 2 a phenolic donor + H2O2 = 2 a phenolic radical donor + 2 H2O. In terms of biological role, removal of H(2)O(2), oxidation of toxic reductants, biosynthesis and degradation of lignin, suberization, auxin catabolism, response to environmental stresses such as wounding, pathogen attack and oxidative stress. These functions might be dependent on each isozyme/isoform in each plant tissue. In Oryza sativa subsp. japonica (Rice), this protein is Peroxidase 1 (PRX74).